Reading from the N-terminus, the 316-residue chain is Ninja-family protein 2 (316 aa).

Disordered stretches follow at residues 1 to 29 (MASR…GEPD) and 72 to 236 (TSDD…TSTG). Basic and acidic residues predominate over residues 99–108 (ERWRRREMQS). Positions 156–166 (DQGNTSSSMPE) are enriched in polar residues. Composition is skewed to low complexity over residues 179 to 199 (SSME…QNKS) and 222 to 235 (LRTL…TTST).

The protein belongs to the Ninja family.

The protein resides in the nucleus. In Triticum aestivum (Wheat), this protein is Ninja-family protein 2 (AFP-B1).